The following is a 505-amino-acid chain: L-arabinose isomerase (505 aa).

Mn(2+) contacts are provided by Glu-308, Glu-335, His-352, and His-453.

This sequence belongs to the arabinose isomerase family. Requires Mn(2+) as cofactor.

It carries out the reaction beta-L-arabinopyranose = L-ribulose. It participates in carbohydrate degradation; L-arabinose degradation via L-ribulose; D-xylulose 5-phosphate from L-arabinose (bacterial route): step 1/3. Its function is as follows. Catalyzes the conversion of L-arabinose to L-ribulose. This chain is L-arabinose isomerase, found in Bifidobacterium longum (strain DJO10A).